Reading from the N-terminus, the 395-residue chain is Serine-type anaerobic sulfatase-maturating enzyme (395 aa).

A Radical SAM core domain is found at 18 to 249 (PRSPVPFHIL…QWRKRCDRGR (232 aa)). Positions 35 and 39 each coordinate [4Fe-4S] cluster. An S-adenosyl-L-methionine-binding site is contributed by Tyr-41. Cys-42 lines the [4Fe-4S] cluster pocket. S-adenosyl-L-methionine contacts are provided by Gly-84 and Arg-152. [4Fe-4S] cluster-binding residues include Cys-270, Cys-276, and Cys-291. The Proton acceptor role is filled by Asp-292. [4Fe-4S] cluster-binding residues include Cys-331, Cys-334, Cys-340, Cys-344, and Cys-357.

It belongs to the radical SAM superfamily. Anaerobic sulfatase-maturating enzyme family. In terms of assembly, monomer. Interacts with AtsA prior to its export to the periplasm. This interaction depends on the presence of AtsA 'Ser-72'. Binding of SAM to AtsB promotes the formation of a ternary AtsA-AtsB-SAM complex. The cofactor is [4Fe-4S] cluster.

Its subcellular location is the cytoplasm. It catalyses the reaction L-seryl-[sulfatase] + S-adenosyl-L-methionine = 3-oxo-L-alanyl-[sulfatase] + 5'-deoxyadenosine + L-methionine + H(+). The protein operates within protein modification; sulfatase oxidation. Activity is inhibited by iron chelators. In terms of biological role, involved in 'Ser-type' sulfatase maturation under anaerobic conditions. Catalyzes the post-translational modification of serine ('Ser-72' in the arylsulfatase AtsA) into 3-oxoalanine (also known as C(alpha)-formylglycine (FGly)), by a free radical chemical mechanism initiated via the reductive cleavage of S-adenosyl-L-methionine (SAM). Is capable of catalyzing multiple turnovers. In vitro, use of a peptide substrate in which the target serine is changed to cysteine also gives rise to turnover, supporting approximately 4-fold the activity of that observed with the natural substrate. The protein is Serine-type anaerobic sulfatase-maturating enzyme of Klebsiella pneumoniae.